Here is a 156-residue protein sequence, read N- to C-terminus: ATP synthase subunit b (156 aa).

Residues L7–L29 traverse the membrane as a helical segment.

It belongs to the ATPase B chain family. F-type ATPases have 2 components, F(1) - the catalytic core - and F(0) - the membrane proton channel. F(1) has five subunits: alpha(3), beta(3), gamma(1), delta(1), epsilon(1). F(0) has three main subunits: a(1), b(2) and c(10-14). The alpha and beta chains form an alternating ring which encloses part of the gamma chain. F(1) is attached to F(0) by a central stalk formed by the gamma and epsilon chains, while a peripheral stalk is formed by the delta and b chains.

The protein resides in the cell inner membrane. F(1)F(0) ATP synthase produces ATP from ADP in the presence of a proton or sodium gradient. F-type ATPases consist of two structural domains, F(1) containing the extramembraneous catalytic core and F(0) containing the membrane proton channel, linked together by a central stalk and a peripheral stalk. During catalysis, ATP synthesis in the catalytic domain of F(1) is coupled via a rotary mechanism of the central stalk subunits to proton translocation. In terms of biological role, component of the F(0) channel, it forms part of the peripheral stalk, linking F(1) to F(0). This Burkholderia vietnamiensis (strain G4 / LMG 22486) (Burkholderia cepacia (strain R1808)) protein is ATP synthase subunit b.